The chain runs to 514 residues: GMP synthase [glutamine-hydrolyzing] (514 aa).

One can recognise a Glutamine amidotransferase type-1 domain in the interval 9–199 (MILVLDFGGQ…LFEVCQCTGD (191 aa)). Cysteine 86 serves as the catalytic Nucleophile. Catalysis depends on residues histidine 173 and glutamate 175. The GMPS ATP-PPase domain maps to 200–389 (WSMENFIEIE…LGLSDEIVWR (190 aa)). 227–233 (SGGVDSS) is an ATP binding site.

As to quaternary structure, homodimer.

The catalysed reaction is XMP + L-glutamine + ATP + H2O = GMP + L-glutamate + AMP + diphosphate + 2 H(+). It participates in purine metabolism; GMP biosynthesis; GMP from XMP (L-Gln route): step 1/1. Catalyzes the synthesis of GMP from XMP. This is GMP synthase [glutamine-hydrolyzing] from Exiguobacterium sibiricum (strain DSM 17290 / CCUG 55495 / CIP 109462 / JCM 13490 / 255-15).